The following is a 344-amino-acid chain: MIELRNLSQRFPGPGGWVEALHNVNLTIPQGEVFGIIGRSGAGKSTLVRTINLLTRPTEGNVVVGGRDLTLLSAGALREARREIGMIFQHFNLLSSRTVFDNVALPLELAGASRADIEAAVLPLLDLVGLSAQKDRYPSQISGGQKQRVGIARALASQPKVLLSDEATSALDPETTRSILDLLKRINRELGLTIVLITHQMEVIKQVCDRVAVLDAGRVVEEGRVIDVFLQPHHEVTRALIGDVIAQELPPALKARVAERLKTGRGHLLRLAFTGSGVDQPILSETIRRYELDFNILHGQIDEIQGQAFGSLAVLAGGEPGKVGQALAFLREQGVVVEELSYVE.

In terms of domain architecture, ABC transporter spans 2–241; sequence IELRNLSQRF…PHHEVTRALI (240 aa). 38–45 serves as a coordination point for ATP; sequence GRSGAGKS.

This sequence belongs to the ABC transporter superfamily. Methionine importer (TC 3.A.1.24) family. In terms of assembly, the complex is composed of two ATP-binding proteins (MetN), two transmembrane proteins (MetI) and a solute-binding protein (MetQ).

The protein resides in the cell inner membrane. It catalyses the reaction L-methionine(out) + ATP + H2O = L-methionine(in) + ADP + phosphate + H(+). The catalysed reaction is D-methionine(out) + ATP + H2O = D-methionine(in) + ADP + phosphate + H(+). Part of the ABC transporter complex MetNIQ involved in methionine import. Responsible for energy coupling to the transport system. This chain is Methionine import ATP-binding protein MetN 1, found in Burkholderia orbicola (strain AU 1054).